Reading from the N-terminus, the 127-residue chain is Large ribosomal subunit protein eL8 (127 aa).

It belongs to the eukaryotic ribosomal protein eL8 family. Part of the 50S ribosomal subunit. Component of box C/D small ribonucleoprotein (sRNP) particles that contain rpl7ae, FlpA and nop5, plus a guide RNA. These sRNP particles form homodimers, giving rise to an asymmetric holoenzyme. Probably part of the RNase P complex.

It localises to the cytoplasm. Multifunctional RNA-binding protein that recognizes the K-turn motif in ribosomal RNA, the RNA component of RNase P, box H/ACA, box C/D and box C'/D' sRNAs. The protein is Large ribosomal subunit protein eL8 of Saccharolobus solfataricus (strain ATCC 35092 / DSM 1617 / JCM 11322 / P2) (Sulfolobus solfataricus).